Consider the following 134-residue polypeptide: Calcitonin gene-related peptide 2 (134 aa).

Positions 1–26 are cleaved as a signal peptide; that stretch reads MDFWKFFPFLALSSMWVLCLASSLQA. Residues 27–86 constitute a propeptide that is removed on maturation; it reads APFRSALESSLDLGTLSDQEKHLLLAALIQDYEQKARKLEQEEQETEGSRKGSSSSVISQ. The tract at residues 65–91 is disordered; it reads LEQEEQETEGSRKGSSSSVISQKRSCN. A compositionally biased stretch (low complexity) spans 77–89; sequence KGSSSSVISQKRS. A disulfide bond links Cys90 and Cys95. The residue at position 125 (Phe125) is a Phenylalanine amide. Residues 131–134 constitute a propeptide that is removed on maturation; it reads DLRV.

The protein belongs to the calcitonin family.

The protein resides in the secreted. Functionally, CALCB/CGRP2 is a peptide hormone that induces vasodilation mediated by the CALCRL-RAMP1 receptor complex. Dilates a variety of vessels including the coronary, cerebral and systemic vasculature. Its abundance in the CNS also points toward a neurotransmitter or neuromodulator role. This Rattus norvegicus (Rat) protein is Calcitonin gene-related peptide 2.